We begin with the raw amino-acid sequence, 240 residues long: uncharacterized protein (240 aa).

This sequence to H.influenzae HI_0575.

This is an uncharacterized protein from Escherichia coli (strain K12).